The primary structure comprises 242 residues: Ribosomal RNA small subunit methyltransferase G (242 aa).

S-adenosyl-L-methionine is bound by residues G82, F87, 133–134 (AE), and R152.

It belongs to the methyltransferase superfamily. RNA methyltransferase RsmG family.

The protein localises to the cytoplasm. Functionally, specifically methylates the N7 position of a guanine in 16S rRNA. The polypeptide is Ribosomal RNA small subunit methyltransferase G (Acetivibrio thermocellus (strain ATCC 27405 / DSM 1237 / JCM 9322 / NBRC 103400 / NCIMB 10682 / NRRL B-4536 / VPI 7372) (Clostridium thermocellum)).